A 138-amino-acid polypeptide reads, in one-letter code: Holo-[acyl-carrier-protein] synthase (138 aa).

Mg(2+) contacts are provided by aspartate 8 and glutamate 57.

It belongs to the P-Pant transferase superfamily. AcpS family. It depends on Mg(2+) as a cofactor.

The protein resides in the cytoplasm. The catalysed reaction is apo-[ACP] + CoA = holo-[ACP] + adenosine 3',5'-bisphosphate + H(+). Functionally, transfers the 4'-phosphopantetheine moiety from coenzyme A to a Ser of acyl-carrier-protein. The polypeptide is Holo-[acyl-carrier-protein] synthase (Phenylobacterium zucineum (strain HLK1)).